A 313-amino-acid chain; its full sequence is HPr kinase/phosphorylase (313 aa).

Active-site residues include His-140 and Lys-161. 155 to 162 (GNSGAGKS) serves as a coordination point for ATP. Ser-162 provides a ligand contact to Mg(2+). The Proton acceptor; for phosphorylation activity. Proton donor; for dephosphorylation activity role is filled by Asp-179. Positions 203-212 (IEVRGLGILN) are important for the catalytic mechanism of both phosphorylation and dephosphorylation. Residue Glu-204 participates in Mg(2+) binding. Arg-246 is a catalytic residue. Residues 267 to 272 (PVAAGR) are important for the catalytic mechanism of dephosphorylation.

Belongs to the HPrK/P family. In terms of assembly, homohexamer. The cofactor is Mg(2+).

The catalysed reaction is [HPr protein]-L-serine + ATP = [HPr protein]-O-phospho-L-serine + ADP + H(+). The enzyme catalyses [HPr protein]-O-phospho-L-serine + phosphate + H(+) = [HPr protein]-L-serine + diphosphate. Catalyzes the ATP- as well as the pyrophosphate-dependent phosphorylation of a specific serine residue in HPr, a phosphocarrier protein of the phosphoenolpyruvate-dependent sugar phosphotransferase system (PTS). HprK/P also catalyzes the pyrophosphate-producing, inorganic phosphate-dependent dephosphorylation (phosphorolysis) of seryl-phosphorylated HPr (P-Ser-HPr). This Aromatoleum aromaticum (strain DSM 19018 / LMG 30748 / EbN1) (Azoarcus sp. (strain EbN1)) protein is HPr kinase/phosphorylase.